The sequence spans 876 residues: DNA mismatch repair protein MutS (876 aa).

Gly628–Ser635 contacts ATP.

The protein belongs to the DNA mismatch repair MutS family.

Functionally, this protein is involved in the repair of mismatches in DNA. It is possible that it carries out the mismatch recognition step. This protein has a weak ATPase activity. This chain is DNA mismatch repair protein MutS, found in Chlorobaculum parvum (strain DSM 263 / NCIMB 8327) (Chlorobium vibrioforme subsp. thiosulfatophilum).